The chain runs to 250 residues: Ribosomal RNA small subunit methyltransferase J (250 aa).

Residues 96-97 (RD) and D168 each bind S-adenosyl-L-methionine.

Belongs to the methyltransferase superfamily. RsmJ family.

The protein localises to the cytoplasm. It carries out the reaction guanosine(1516) in 16S rRNA + S-adenosyl-L-methionine = N(2)-methylguanosine(1516) in 16S rRNA + S-adenosyl-L-homocysteine + H(+). In terms of biological role, specifically methylates the guanosine in position 1516 of 16S rRNA. The sequence is that of Ribosomal RNA small subunit methyltransferase J from Neisseria gonorrhoeae (strain ATCC 700825 / FA 1090).